We begin with the raw amino-acid sequence, 399 residues long: Alpha-ketoglutarate-dependent dioxygenase fc-dox (399 aa).

Fe cation-binding residues include histidine 158 and aspartate 160. Residue threonine 203 coordinates 2-oxoglutarate. Histidine 355 serves as a coordination point for Fe cation. Position 367 (arginine 367) interacts with 2-oxoglutarate. Residues 371–399 (QGWLAGDRPPKGPVPIPDPRARSSIYYQK) are disordered.

It belongs to the TfdA dioxygenase family. Fe(2+) serves as cofactor.

It participates in mycotoxin biosynthesis. In terms of biological role, alpha-ketoglutarate-dependent dioxygenase; part of the 2 gene clusters that mediate the biosynthesis of fusicoccins, diterpene glucosides that display phytohormone-like activity and function as potent activators of plasma membrane H(+)-ATPases in plants by modifying 14-3-3 proteins and cause the plant disease constriction canker. The first step in the pathway is performed by the fusicoccadiene synthase PaFS that possesses both prenyl transferase and terpene cyclase activity, converting isopentenyl diphosphate and dimethylallyl diphosphate into geranylgeranyl diphosphate (GGDP) and successively converting GGDP into fusicocca-2,10(14)-diene, a precursor for fusicoccin H. The second step is the oxidation at the C-8 position by the cytochrome P450 monooxygenase PaP450-2 to yield fusicocca-2,10(14)-diene-8-beta-ol. The cytochrome P450 monooxygenase PaP450-1 then catalyzes the hydroxylation at the C-16 position to produce fusicocca-2,10(14)-diene-8-beta,16-diol. The dioxygenase fc-dox then catalyzes the 16-oxydation of fusicocca-2,10(14)-diene-8-beta,16-diol to yield an aldehyde (8-beta-hydroxyfusicocca-1,10(14)-dien-16-al). The short-chain dehydrogenase/reductase fc-sdr catalyzes the reduction of the aldehyde to yield fusicocca-1,10(14)-diene-8-beta,16-diol. The next step is the hydroxylation at C-9 performed by the cytochrome P450 monooxygenase PaP450-3 that leads to fusicoccin H aglycon which is glycosylated to fusicoccin H by the O-glycosyltransferase PaGT. Hydroxylation at C-12 by the cytochrome P450 monooxygenase PaP450-4 leads then to the production of fusicoccin Q and is followed by methylation by the O-methyltransferase PaMT to yield fusicoccin P. Fusicoccin P is further converted to fusicoccin J via prenylation by the O-glucose prenyltransferase PaPT. Cytochrome P450 monooxygenase PaP450-5 then performs hydroxylation at C-19 to yield dideacetyl-fusicoccin A which is acetylated to 3'-O-deacetyl-fusicoccin A by the O-acetyltransferase PaAT-2. Finally, a another acetylation by the O-acetyltransferase PaAT-1 yields fusicoccin A. The chain is Alpha-ketoglutarate-dependent dioxygenase fc-dox from Phomopsis amygdali (Fusicoccum amygdali).